The chain runs to 552 residues: Scaffold protein (552 aa).

The protein belongs to the poxviridae protein D13 family. Homotrimer. Self-assembles to form a layer. Interacts with A17 (via N-terminus); this interaction is necessary for D13 association with membranes.

The protein localises to the membrane. Its function is as follows. Scaffold protein which forms a transitory spherical honeycomb lattice providing curvature and rigidity to the convex membrane of crescent and immature virions (IV). This association occurs concomitantly with viral membrane formation. Targeted by the drug rifampicin, which prevents the formation of this lattice, and hence virus morphogenesis. In the presence of rifampicin, irregularly shaped membranes that lack the honeycomb layer accumulate around areas of electron-dense viroplasm. This layer is lost from virions during maturation from IV to mature virion (MV), through the proteolysis of A17 N-terminus. This Vertebrata (FPV) protein is Scaffold protein.